Consider the following 349-residue polypeptide: Probable transporter vicT (349 aa).

The EamA domain occupies 25-153; that stretch reads IAAALLHALA…TALAGVVLVL (129 aa). 9 helical membrane passes run 49-69, 89-109, 111-131, 133-153, 179-199, 215-235, 244-264, 269-289, and 294-314; these read PFTV…AYLW, AAGG…LSLS, ATVL…YWEG, TFAF…VLVL, LKGV…FSAM, FGVS…EVVW, LLAI…AGLG, RVTI…WAIW, and NVLT…PYLF.

The protein belongs to the TPT transporter family. SLC35D subfamily.

Its subcellular location is the membrane. In terms of biological role, probable transporter; part of the gene cluster that mediates the biosynthesis of the secondary metabolite victorin, the molecular basis for Victoria blight of oats. In Bipolaris victoriae (strain FI3) (Victoria blight of oats agent), this protein is Probable transporter vicT.